A 422-amino-acid chain; its full sequence is Imidazolonepropionase (422 aa).

Fe(3+) contacts are provided by H82 and H84. Zn(2+)-binding residues include H82 and H84. Residues R91, Y154, and H187 each coordinate 4-imidazolone-5-propanoate. N-formimidoyl-L-glutamate is bound at residue Y154. H252 serves as a coordination point for Fe(3+). H252 contributes to the Zn(2+) binding site. Position 255 (E255) interacts with 4-imidazolone-5-propanoate. Residue D327 participates in Fe(3+) binding. D327 contributes to the Zn(2+) binding site. N-formimidoyl-L-glutamate contacts are provided by N329 and G331. S332 contacts 4-imidazolone-5-propanoate.

Belongs to the metallo-dependent hydrolases superfamily. HutI family. Zn(2+) serves as cofactor. Fe(3+) is required as a cofactor.

The protein localises to the cytoplasm. It catalyses the reaction 4-imidazolone-5-propanoate + H2O = N-formimidoyl-L-glutamate. Its pathway is amino-acid degradation; L-histidine degradation into L-glutamate; N-formimidoyl-L-glutamate from L-histidine: step 3/3. Functionally, catalyzes the hydrolytic cleavage of the carbon-nitrogen bond in imidazolone-5-propanoate to yield N-formimidoyl-L-glutamate. It is the third step in the universal histidine degradation pathway. The polypeptide is Imidazolonepropionase (Alkaliphilus metalliredigens (strain QYMF)).